The following is a 295-amino-acid chain: Bifunctional protein FolD (295 aa).

NADP(+)-binding positions include 166–168, Ser195, and Ile236; that span reads GRS.

It belongs to the tetrahydrofolate dehydrogenase/cyclohydrolase family. Homodimer.

It carries out the reaction (6R)-5,10-methylene-5,6,7,8-tetrahydrofolate + NADP(+) = (6R)-5,10-methenyltetrahydrofolate + NADPH. The enzyme catalyses (6R)-5,10-methenyltetrahydrofolate + H2O = (6R)-10-formyltetrahydrofolate + H(+). It functions in the pathway one-carbon metabolism; tetrahydrofolate interconversion. In terms of biological role, catalyzes the oxidation of 5,10-methylenetetrahydrofolate to 5,10-methenyltetrahydrofolate and then the hydrolysis of 5,10-methenyltetrahydrofolate to 10-formyltetrahydrofolate. The chain is Bifunctional protein FolD from Chlorobium phaeovibrioides (strain DSM 265 / 1930) (Prosthecochloris vibrioformis (strain DSM 265)).